We begin with the raw amino-acid sequence, 352 residues long: MTITIGQYVEKRGLFDNVDDWLRRERFVFVGWSGLLLFPCAYMALGGWLTGTTFVTSWYTHGLATSYLEGCNFLTAAVSTPANSMAHSLLFLWGPEAQGDLTRWFQLGGLWPFVALHGAFSLIGFMLRQFEIAQSLKLRPYNAIAFSAPIAVFVSVFLIYPLGQAGWFFAPSFGVAAIFRFILFFQGFHNWTLNPFHMMGVAGVLGAALLCAIHGATVENTLFEDGDGANTFRAFNPTQAEETYSMVTANRFWSQIFGVAFSNKRWLHFFMLFVPVTGLWMSAIGVVGLALNLRAYDFVSQEIRAAEDPEFETFYTKNILLNEGIRAWMAAQDQPHEKLTFPEEVLPRGNAL.

Thr-2 is modified (N-acetylthreonine). At Thr-2 the chain carries Phosphothreonine. Residues 40–60 (CAYMALGGWLTGTTFVTSWYT) form a helical membrane-spanning segment. His-117 contacts chlorophyll a. The chain crosses the membrane as a helical span at residues 124-140 (GFMLRQFEIAQSLKLRP). Positions 129 and 142 each coordinate pheophytin a. The chain crosses the membrane as a helical span at residues 152-165 (VFVSVFLIYPLGQA). His-197 contacts chlorophyll a. A helical membrane pass occupies residues 207 to 227 (AALLCAIHGATVENTLFEDGD). A plastoquinone is bound by residues His-214 and Phe-261. His-214 is a binding site for Fe cation. Fe cation is bound at residue His-268. Residues 278–294 (GLWMSAIGVVGLALNLR) form a helical membrane-spanning segment.

The protein belongs to the reaction center PufL/M/PsbA/D family. PSII is composed of 1 copy each of membrane proteins PsbA, PsbB, PsbC, PsbD, PsbE, PsbF, PsbH, PsbI, PsbJ, PsbK, PsbL, PsbM, PsbT, PsbX, PsbY, PsbZ, Psb30/Ycf12, at least 3 peripheral proteins of the oxygen-evolving complex and a large number of cofactors. It forms dimeric complexes. The cofactor is The D1/D2 heterodimer binds P680, chlorophylls that are the primary electron donor of PSII, and subsequent electron acceptors. It shares a non-heme iron and each subunit binds pheophytin, quinone, additional chlorophylls, carotenoids and lipids. There is also a Cl(-1) ion associated with D1 and D2, which is required for oxygen evolution. The PSII complex binds additional chlorophylls, carotenoids and specific lipids..

Its subcellular location is the plastid. It is found in the chloroplast thylakoid membrane. It catalyses the reaction 2 a plastoquinone + 4 hnu + 2 H2O = 2 a plastoquinol + O2. Its function is as follows. Photosystem II (PSII) is a light-driven water:plastoquinone oxidoreductase that uses light energy to abstract electrons from H(2)O, generating O(2) and a proton gradient subsequently used for ATP formation. It consists of a core antenna complex that captures photons, and an electron transfer chain that converts photonic excitation into a charge separation. The D1/D2 (PsbA/PsbD) reaction center heterodimer binds P680, the primary electron donor of PSII as well as several subsequent electron acceptors. D2 is needed for assembly of a stable PSII complex. The protein is Photosystem II D2 protein of Stigeoclonium helveticum (Green alga).